The primary structure comprises 891 residues: Major core protein OPG136 precursor (891 aa).

A propeptide spanning residues serine 615–glycine 697 is cleaved from the precursor.

This sequence belongs to the orthopxvirus protein OPG136 family. Interacts with P39/A4. The precursor is cleaved by OPG083 to give rise to the 62 kDa mature protein during virion maturation. Proteolytic cleavage of major core proteins OPG136, OPG129, and OPG098, which occurs at a late stage of core formation, is required for production of infectious mature virions (MV).

It is found in the virion. In terms of biological role, core protein 4a is the most abundant virion protein. Major component of the virion core that undergoes proteolytic processing during the immature virion (IV) to mature virion (MV) transition. The sequence is that of Major core protein OPG136 precursor (OPG136) from Cynomys gunnisoni (Gunnison's prairie dog).